The primary structure comprises 134 residues: MRILLLSALFLSLTTLVLSADLGIEKTHVVECNRKTTKGDTVHMHYRGTLAADGSEFDSSYGRNQPLKFKLGAGRVIKGWDEGLLDMCVGEKRTLTIPPEYGYGERGIGPIPGGATLIFETELVQIEGVNNDEL.

A signal peptide spans 1-19 (MRILLLSALFLSLTTLVLS). Residues 39-127 (GDTVHMHYRG…IFETELVQIE (89 aa)) form the PPIase FKBP-type domain. Positions 131-134 (NDEL) match the Prevents secretion from ER motif.

This sequence belongs to the FKBP-type PPIase family. FKBP2 subfamily.

The protein resides in the endoplasmic reticulum. It carries out the reaction [protein]-peptidylproline (omega=180) = [protein]-peptidylproline (omega=0). Its activity is regulated as follows. Inhibited by both FK506 and rapamycin. Functionally, PPIases accelerate the folding of proteins. It catalyzes the cis-trans isomerization of proline imidic peptide bonds in oligopeptides. The sequence is that of FK506-binding protein 2 (fpr2) from Aspergillus fumigatus (strain ATCC MYA-4609 / CBS 101355 / FGSC A1100 / Af293) (Neosartorya fumigata).